The following is a 167-amino-acid chain: Ribosome maturation factor RimM (167 aa).

Positions 94–167 constitute a PRC barrel domain; sequence EENEYFIKDL…VMVVHLLEGL (74 aa).

Belongs to the RimM family. Binds ribosomal protein uS19.

It is found in the cytoplasm. In terms of biological role, an accessory protein needed during the final step in the assembly of 30S ribosomal subunit, possibly for assembly of the head region. Essential for efficient processing of 16S rRNA. May be needed both before and after RbfA during the maturation of 16S rRNA. It has affinity for free ribosomal 30S subunits but not for 70S ribosomes. The chain is Ribosome maturation factor RimM from Thermoanaerobacter pseudethanolicus (strain ATCC 33223 / 39E) (Clostridium thermohydrosulfuricum).